The sequence spans 211 residues: Guanylate kinase (211 aa).

Residues 5 to 185 form the Guanylate kinase-like domain; the sequence is GLLLILSSPS…AEEQLKMILS (181 aa). 12 to 19 contributes to the ATP binding site; that stretch reads SPSGAGKS.

This sequence belongs to the guanylate kinase family.

The protein localises to the cytoplasm. The catalysed reaction is GMP + ATP = GDP + ADP. Its function is as follows. Essential for recycling GMP and indirectly, cGMP. This chain is Guanylate kinase, found in Cereibacter sphaeroides (strain ATCC 17023 / DSM 158 / JCM 6121 / CCUG 31486 / LMG 2827 / NBRC 12203 / NCIMB 8253 / ATH 2.4.1.) (Rhodobacter sphaeroides).